A 416-amino-acid polypeptide reads, in one-letter code: Inhibitor of growth protein 3 (416 aa).

Disordered stretches follow at residues 126-165, 177-198, and 283-319; these read LDTP…PEKK, SDAS…STNN, and QTLT…SSSL. The span at 136-152 shows a compositional bias: basic residues; that stretch reads HHVHSHSSGEKRKHIPS. Residues 156-165 are compositionally biased toward basic and acidic residues; the sequence is STTDHVPEKK. Polar residues predominate over residues 177 to 187; the sequence is SDASKENTAGC. Composition is skewed to low complexity over residues 189–198, 283–293, and 302–319; these read TNLSSSSTNN, QTLTSSATTDS, and NNKS…SSSL. Residues 358–407 form a PHD-type zinc finger; sequence PRYCICNQVSYGEMVGCDNQDCPIEWFHYGCVGLSEAPKGKWYCPQCTAA. The Zn(2+) site is built by Cys-361, Cys-363, Cys-374, Cys-379, His-385, Cys-388, Cys-401, and Cys-404.

This sequence belongs to the ING family. In terms of assembly, interacts with H3K4me3 and to a lesser extent with H3K4me2. Component of the NuA4 histone acetyltransferase complex.

It is found in the nucleus. Component of the NuA4 histone acetyltransferase (HAT) complex which is involved in transcriptional activation of select genes principally by acetylation of nucleosomal histone H4 and H2A. This modification may both alter nucleosome - DNA interactions and promote interaction of the modified histones with other proteins which positively regulate transcription. NuA4 may also play a direct role in DNA repair when directly recruited to sites of DNA damage. In Xenopus laevis (African clawed frog), this protein is Inhibitor of growth protein 3 (ing3).